A 71-amino-acid chain; its full sequence is Translation initiation factor IF-1 (71 aa).

The S1-like domain maps to 1–71 (MSKQEMLSFS…LTKGRITFRG (71 aa)).

The protein belongs to the IF-1 family. As to quaternary structure, component of the 30S ribosomal translation pre-initiation complex which assembles on the 30S ribosome in the order IF-2 and IF-3, IF-1 and N-formylmethionyl-tRNA(fMet); mRNA recruitment can occur at any time during PIC assembly.

It localises to the cytoplasm. One of the essential components for the initiation of protein synthesis. Stabilizes the binding of IF-2 and IF-3 on the 30S subunit to which N-formylmethionyl-tRNA(fMet) subsequently binds. Helps modulate mRNA selection, yielding the 30S pre-initiation complex (PIC). Upon addition of the 50S ribosomal subunit IF-1, IF-2 and IF-3 are released leaving the mature 70S translation initiation complex. The polypeptide is Translation initiation factor IF-1 (Pelagibacter ubique (strain HTCC1062)).